Reading from the N-terminus, the 318-residue chain is uncharacterized protein (318 aa).

Residues 67–157 (LAFDELEKEK…SLKAIQTSQE (91 aa)) are a coiled coil. The segment at 172-318 (ESTNKVEKNA…KGFFARLFNL (147 aa)) is disordered. Composition is skewed to basic and acidic residues over residues 175–193 (NKVE…KDSK) and 219–236 (KVDK…EKAS). The segment covering 237 to 248 (VEQSKNGNAAET) has biased composition (polar residues). Basic and acidic residues-rich tracts occupy residues 249-274 (SNKE…HAEA) and 300-310 (SEPKPQEEKKG).

This is an uncharacterized protein from Staphylococcus aureus (strain MW2).